Consider the following 181-residue polypeptide: Inner membrane-spanning protein YciB (181 aa).

The next 5 helical transmembrane spans lie at 24 to 44 (SATAVAIVATFAQIGWVWLRH), 49 to 69 (NMLWVSLAIIIVFGGATLILQ), 81 to 101 (LYWLFAVILFLAHSFFGKNLI), 119 to 139 (LNISWSVFFGAMGALNLYVAY), and 149 to 169 (FKLFGFMGLMFVFIILQALLL).

Belongs to the YciB family.

Its subcellular location is the cell inner membrane. Its function is as follows. Plays a role in cell envelope biogenesis, maintenance of cell envelope integrity and membrane homeostasis. This chain is Inner membrane-spanning protein YciB, found in Nitrosomonas eutropha (strain DSM 101675 / C91 / Nm57).